We begin with the raw amino-acid sequence, 342 residues long: Anthranilate phosphoribosyltransferase (342 aa).

Residues Gly83, 86-87, Thr91, 93-96, 111-119, and Ser123 contribute to the 5-phospho-alpha-D-ribose 1-diphosphate site; these read GD, NVST, and KHGNRSVSG. Anthranilate is bound at residue Gly83. Mg(2+) is bound at residue Ser95. Asn114 lines the anthranilate pocket. An anthranilate-binding site is contributed by Arg169. Asp228 and Glu229 together coordinate Mg(2+).

It belongs to the anthranilate phosphoribosyltransferase family. In terms of assembly, homodimer. The cofactor is Mg(2+).

It catalyses the reaction N-(5-phospho-beta-D-ribosyl)anthranilate + diphosphate = 5-phospho-alpha-D-ribose 1-diphosphate + anthranilate. It functions in the pathway amino-acid biosynthesis; L-tryptophan biosynthesis; L-tryptophan from chorismate: step 2/5. Functionally, catalyzes the transfer of the phosphoribosyl group of 5-phosphorylribose-1-pyrophosphate (PRPP) to anthranilate to yield N-(5'-phosphoribosyl)-anthranilate (PRA). The sequence is that of Anthranilate phosphoribosyltransferase from Halorhodospira halophila (strain DSM 244 / SL1) (Ectothiorhodospira halophila (strain DSM 244 / SL1)).